We begin with the raw amino-acid sequence, 317 residues long: Acetyl-coenzyme A carboxylase carboxyl transferase subunit alpha (317 aa).

Positions Asn33–Glu294 constitute a CoA carboxyltransferase C-terminal domain.

Belongs to the AccA family. Acetyl-CoA carboxylase is a heterohexamer composed of biotin carboxyl carrier protein (AccB), biotin carboxylase (AccC) and two subunits each of ACCase subunit alpha (AccA) and ACCase subunit beta (AccD).

The protein resides in the cytoplasm. It carries out the reaction N(6)-carboxybiotinyl-L-lysyl-[protein] + acetyl-CoA = N(6)-biotinyl-L-lysyl-[protein] + malonyl-CoA. It participates in lipid metabolism; malonyl-CoA biosynthesis; malonyl-CoA from acetyl-CoA: step 1/1. Component of the acetyl coenzyme A carboxylase (ACC) complex. First, biotin carboxylase catalyzes the carboxylation of biotin on its carrier protein (BCCP) and then the CO(2) group is transferred by the carboxyltransferase to acetyl-CoA to form malonyl-CoA. This Pasteurella multocida (strain Pm70) protein is Acetyl-coenzyme A carboxylase carboxyl transferase subunit alpha.